We begin with the raw amino-acid sequence, 79 residues long: D-alanyl carrier protein (79 aa).

One can recognise a Carrier domain in the interval 1 to 77; that stretch reads MSTKETVIDL…KIIQGIEELQ (77 aa). Serine 35 carries the O-(pantetheine 4'-phosphoryl)serine modification.

It belongs to the DltC family. In terms of processing, 4'-phosphopantetheine is transferred from CoA to a specific serine of apo-DCP.

It localises to the cytoplasm. It participates in cell wall biogenesis; lipoteichoic acid biosynthesis. Carrier protein involved in the D-alanylation of lipoteichoic acid (LTA). The loading of thioester-linked D-alanine onto DltC is catalyzed by D-alanine--D-alanyl carrier protein ligase DltA. The DltC-carried D-alanyl group is further transferred to cell membrane phosphatidylglycerol (PG) by forming an ester bond, probably catalyzed by DltD. D-alanylation of LTA plays an important role in modulating the properties of the cell wall in Gram-positive bacteria, influencing the net charge of the cell wall. This Streptococcus equi subsp. equi (strain 4047) protein is D-alanyl carrier protein.